The sequence spans 562 residues: Eukaryotic translation initiation factor 3 subunit L (562 aa).

The tract at residues 1-29 (MSHAKEDYDSSYDPYSYQADYDGHTGDPK) is disordered. Residues 11–20 (SYDPYSYQAD) are compositionally biased toward low complexity. The 207-residue stretch at 329–535 (DSIRVFANIL…IHIADTKVAR (207 aa)) folds into the PCI domain.

The protein belongs to the eIF-3 subunit L family. In terms of assembly, component of the eukaryotic translation initiation factor 3 (eIF-3) complex, which is composed of 13 subunits: eif3a, eif3b, eif3c, eif3d, eif3e, eif3f, eif3g, eif3h, eif3i, eif3j, eif3k, eif3l and eif3m.

It localises to the cytoplasm. Functionally, component of the eukaryotic translation initiation factor 3 (eIF-3) complex, which is involved in protein synthesis of a specialized repertoire of mRNAs and, together with other initiation factors, stimulates binding of mRNA and methionyl-tRNAi to the 40S ribosome. The eIF-3 complex specifically targets and initiates translation of a subset of mRNAs involved in cell proliferation. In Xenopus laevis (African clawed frog), this protein is Eukaryotic translation initiation factor 3 subunit L (eif3l).